Reading from the N-terminus, the 384-residue chain is Spermidine/putrescine import ATP-binding protein PotA (384 aa).

In terms of domain architecture, ABC transporter spans 6-238 (IAFQNVSKVF…PINHFVATFI (233 aa)). Position 40-47 (40-47 (GASGSGKS)) interacts with ATP.

Belongs to the ABC transporter superfamily. Spermidine/putrescine importer (TC 3.A.1.11.1) family. The complex is composed of two ATP-binding proteins (PotA), two transmembrane proteins (PotB and PotC) and a solute-binding protein (PotD).

It localises to the cell membrane. It catalyses the reaction ATP + H2O + polyamine-[polyamine-binding protein]Side 1 = ADP + phosphate + polyamineSide 2 + [polyamine-binding protein]Side 1.. Its function is as follows. Part of the ABC transporter complex PotABCD involved in spermidine/putrescine import. Responsible for energy coupling to the transport system. In Streptococcus thermophilus (strain ATCC BAA-491 / LMD-9), this protein is Spermidine/putrescine import ATP-binding protein PotA.